The sequence spans 190 residues: dCTP deaminase, dUMP-forming (190 aa).

DCTP is bound by residues 101–106, D119, 127–129, Q148, Y162, and Q174; these read KSSLGR and TLE. Residue E129 is the Proton donor/acceptor of the active site. The segment at 161–190 is disordered; sequence PYGSSGVGSKYQGQRGPTPSRSYQNFIRST. Residues 171 to 190 show a composition bias toward polar residues; it reads YQGQRGPTPSRSYQNFIRST.

It belongs to the dCTP deaminase family. As to quaternary structure, homotrimer.

The catalysed reaction is dCTP + 2 H2O = dUMP + NH4(+) + diphosphate. It participates in pyrimidine metabolism; dUMP biosynthesis; dUMP from dCTP: step 1/1. Its function is as follows. Bifunctional enzyme that catalyzes both the deamination of dCTP to dUTP and the hydrolysis of dUTP to dUMP without releasing the toxic dUTP intermediate. The protein is dCTP deaminase, dUMP-forming of Mycobacterium marinum (strain ATCC BAA-535 / M).